Here is a 588-residue protein sequence, read N- to C-terminus: MIGRTHMNGTVTEETIGQAVQLKGWVQKRRDLGGLIFLDLRDRTGIVQVVFQPENEQAHRLAESIRSEYVLDIKGTVVQRENPNPNIPTGQVEVVADEVIILNASKMTPFPISEEAEQTSEDLRLKYRYLDLRRPSLQETFRLRSKASNIMRNFLDEQDFLEVETPILTKSTPEGARDYLVPSRVHPGEFYALPQSPQLFKQLLMVSGFERYFQIARCFRDEDLRADRQPEFTQVDIETSFMDVEDLYAMMESMMTRVMKETLGKDITTPFPRMPYAEAMSRFGSDKPDTRFGLELIDVAEAVTGAGFKVFDMALESGGEVKALNVKGAADQFSRKDIDKLQEFTAIYGAKGLAWVKVTADGLNGPIAKFFDEAATARLVEATTAEAGDLLVFVAAKASIVADSLGALRQKLGKELGLIDETVFNFLWVTDFPLVTFEEADSRFYANHHPFTMPRREDLDKLETDPGSVLAVAYDLVLNGYELGGGSQRIYERDIQERMFKLLGFTEEEANEQFGFLMEAFEYGTPPHAGIALGLDRLIMLLAGRTNLRDTIAFPKTASASDLLTAAPSPVSDAQLNELSIRTAVKQS.

E174 serves as a coordination point for L-aspartate. The interval 198-201 (QLFK) is aspartate. R220 contributes to the L-aspartate binding site. ATP contacts are provided by residues 220–222 (RDE) and Q229. Residue H448 coordinates L-aspartate. E482 is a binding site for ATP. An L-aspartate-binding site is contributed by R489. ATP is bound at residue 534-537 (GLDR).

The protein belongs to the class-II aminoacyl-tRNA synthetase family. Type 1 subfamily. As to quaternary structure, homodimer.

It localises to the cytoplasm. The enzyme catalyses tRNA(Asp) + L-aspartate + ATP = L-aspartyl-tRNA(Asp) + AMP + diphosphate. Catalyzes the attachment of L-aspartate to tRNA(Asp) in a two-step reaction: L-aspartate is first activated by ATP to form Asp-AMP and then transferred to the acceptor end of tRNA(Asp). The polypeptide is Aspartate--tRNA ligase (Exiguobacterium sibiricum (strain DSM 17290 / CCUG 55495 / CIP 109462 / JCM 13490 / 255-15)).